The following is a 115-amino-acid chain: Large ribosomal subunit protein bL19 (115 aa).

It belongs to the bacterial ribosomal protein bL19 family.

Functionally, this protein is located at the 30S-50S ribosomal subunit interface and may play a role in the structure and function of the aminoacyl-tRNA binding site. The polypeptide is Large ribosomal subunit protein bL19 (Sodalis glossinidius (strain morsitans)).